A 36-amino-acid chain; its full sequence is Adenylate kinase (36 aa).

10–15 serves as a coordination point for ATP; it reads GAGKGT. The NMP stretch occupies residues 30-36; that stretch reads ATGDLFR. AMP-binding residues include threonine 31 and arginine 36.

This sequence belongs to the adenylate kinase family. As to quaternary structure, monomer.

It localises to the cytoplasm. The catalysed reaction is AMP + ATP = 2 ADP. It participates in purine metabolism; AMP biosynthesis via salvage pathway; AMP from ADP: step 1/1. In terms of biological role, catalyzes the reversible transfer of the terminal phosphate group between ATP and AMP. Plays an important role in cellular energy homeostasis and in adenine nucleotide metabolism. The sequence is that of Adenylate kinase (adk) from Streptomyces griseus.